A 388-amino-acid polypeptide reads, in one-letter code: GTPase Obg (388 aa).

One can recognise an Obg domain in the interval 1 to 159; the sequence is MKFVDEATIR…RSLRLELMLL (159 aa). The region spanning 160–333 is the OBG-type G domain; that stretch reads ADVGLLGMPN…LALKLLDFID (174 aa). GTP contacts are provided by residues 166 to 173, 191 to 195, 213 to 216, 283 to 286, and 314 to 316; these read GMPNAGKS, FTTLV, DIPG, NKAD, and SAY. Residues Ser-173 and Thr-193 each coordinate Mg(2+). The segment at 356-377 is disordered; that stretch reads QNANESVNEDYDDDLDDDDYDD. The span at 362-377 shows a compositional bias: acidic residues; it reads VNEDYDDDLDDDDYDD.

It belongs to the TRAFAC class OBG-HflX-like GTPase superfamily. OBG GTPase family. In terms of assembly, monomer. Requires Mg(2+) as cofactor.

The protein resides in the cytoplasm. In terms of biological role, an essential GTPase which binds GTP, GDP and possibly (p)ppGpp with moderate affinity, with high nucleotide exchange rates and a fairly low GTP hydrolysis rate. Plays a role in control of the cell cycle, stress response, ribosome biogenesis and in those bacteria that undergo differentiation, in morphogenesis control. The polypeptide is GTPase Obg (Shewanella piezotolerans (strain WP3 / JCM 13877)).